The sequence spans 105 residues: Large ribosomal subunit protein uL24 (105 aa).

It belongs to the universal ribosomal protein uL24 family. Part of the 50S ribosomal subunit.

Functionally, one of two assembly initiator proteins, it binds directly to the 5'-end of the 23S rRNA, where it nucleates assembly of the 50S subunit. In terms of biological role, one of the proteins that surrounds the polypeptide exit tunnel on the outside of the subunit. In Vibrio campbellii (strain ATCC BAA-1116), this protein is Large ribosomal subunit protein uL24.